Here is a 96-residue protein sequence, read N- to C-terminus: Fluoride-specific ion channel FluC 1 (96 aa).

Transmembrane regions (helical) follow at residues 4-24 (LIQGLGVGAGAALGVCVRLAL) and 26-46 (LWLGDSAWPILTINVLGAFLM). Gly61 and Thr64 together coordinate Na(+). Residues 69 to 89 (MMLNDVSFYFFTAVGCILAWL) form a helical membrane-spanning segment.

This sequence belongs to the fluoride channel Fluc/FEX (TC 1.A.43) family.

The protein localises to the cell membrane. The enzyme catalyses fluoride(in) = fluoride(out). Its activity is regulated as follows. Na(+) is not transported, but it plays an essential structural role and its presence is essential for fluoride channel function. Fluoride-specific ion channel. Important for reducing fluoride concentration in the cell, thus reducing its toxicity. This chain is Fluoride-specific ion channel FluC 1, found in Corynebacterium glutamicum (strain ATCC 13032 / DSM 20300 / JCM 1318 / BCRC 11384 / CCUG 27702 / LMG 3730 / NBRC 12168 / NCIMB 10025 / NRRL B-2784 / 534).